A 492-amino-acid polypeptide reads, in one-letter code: Argininosuccinate lyase (492 aa).

Belongs to the lyase 1 family. Argininosuccinate lyase subfamily.

The protein resides in the cytoplasm. The enzyme catalyses 2-(N(omega)-L-arginino)succinate = fumarate + L-arginine. It participates in amino-acid biosynthesis; L-arginine biosynthesis; L-arginine from L-ornithine and carbamoyl phosphate: step 3/3. This Methanoculleus marisnigri (strain ATCC 35101 / DSM 1498 / JR1) protein is Argininosuccinate lyase.